The chain runs to 500 residues: L-arabinose isomerase (500 aa).

Mn(2+)-binding residues include Glu-306, Glu-333, His-350, and His-450.

It belongs to the arabinose isomerase family. In terms of assembly, homohexamer. Mn(2+) serves as cofactor.

It carries out the reaction beta-L-arabinopyranose = L-ribulose. Its pathway is carbohydrate degradation; L-arabinose degradation via L-ribulose; D-xylulose 5-phosphate from L-arabinose (bacterial route): step 1/3. Catalyzes the conversion of L-arabinose to L-ribulose. This chain is L-arabinose isomerase, found in Shigella flexneri.